A 145-amino-acid chain; its full sequence is 3-hydroxyacyl-[acyl-carrier-protein] dehydratase FabZ (145 aa).

Residue His47 is part of the active site.

It belongs to the thioester dehydratase family. FabZ subfamily.

It localises to the cytoplasm. The enzyme catalyses a (3R)-hydroxyacyl-[ACP] = a (2E)-enoyl-[ACP] + H2O. Functionally, involved in unsaturated fatty acids biosynthesis. Catalyzes the dehydration of short chain beta-hydroxyacyl-ACPs and long chain saturated and unsaturated beta-hydroxyacyl-ACPs. The protein is 3-hydroxyacyl-[acyl-carrier-protein] dehydratase FabZ of Polaromonas naphthalenivorans (strain CJ2).